Consider the following 599-residue polypeptide: MHIMEGFLPSPWWQFWALLAVVCVLAGMAALIRLVKRNPESLPLLGLAGACVFILSSLKLPSVGSSSHATGTGFGAILFGPAVCSVFCTIVLVFQALLLAHGGITTLGANIISMGVAGPLAACIIFKIGHLIRPEFSIRSFSVTVFCAAAAADLVTYMMTSLQLALAYPAAEGGVLASFVVYLGIFSITQVPLAVLEGILIVLMMRFVIRIRPDIFVSLDILSKKETRILLPSSDQNLSPISKNKWIIAGIIVVLLTASLAFLLAGLGLQSGSDDLVAETLIDLGNLPVFDPLNLVSEDMHGWLFALQAGIGAAVLVFCLYLLRIRSASRGFGKKPHTIFDEHILDDVAIASPLRQVSAWLKLLFCLSAIIIGVTSPLPYLPLFIAGVMIFAALIIAKVSPRLYGSLLTIPLVFAGTGAAVILLITGGGETLIDFFRIGAFHFQITTTSLELAALVLSRTLAGMCSLYFLTLTTPITSLFSVLQKMRMPQAFIDLSMLIYRYIFVFIGEAIAIHNAQIMRGGYGTWKNYLTSFSMLASMLFIRTWEKGEAIFVSMDSRCYDGCMALPEEEGHVTPLSAMAVFLFIALIFGLLCAEMLLL.

The interval 1–239 (MHIMEGFLPS…LLPSSDQNLS (239 aa)) is cbiM. 16 helical membrane passes run 12-32 (WWQF…AALI), 44-64 (LLGL…PSVG), 74-94 (FGAI…VLVF), 106-126 (TLGA…CIIF), 140-160 (SFSV…YMMT), 162-182 (LQLA…FVVY), 183-203 (LGIF…LIVL), 247-267 (IIAG…LAGL), 303-323 (WLFA…LYLL), 356-376 (QVSA…GVTS), 377-397 (PLPY…LIIA), 407-427 (LLTI…LITG), 438-458 (IGAF…LVLS), 463-483 (GMCS…FSVL), 493-513 (IDLS…AIAI), and 579-599 (MAVF…MLLL). The tract at residues 341–599 (DEHILDDVAI…GLLCAEMLLL (259 aa)) is cbiQ.

It in the N-terminal section; belongs to the CbiM family. In the C-terminal section; belongs to the CbiQ family. As to quaternary structure, forms an energy-coupling factor (ECF) transporter complex composed of an ATP-binding protein (A component, CbiO), a transmembrane protein (T component, CbiQ) and 2 possible substrate-capture proteins (S components, CbiM and CbiN) of unknown stoichimetry.

It localises to the cell membrane. The protein operates within cofactor biosynthesis; adenosylcobalamin biosynthesis. In terms of biological role, part of the energy-coupling factor (ECF) transporter complex CbiMNOQ involved in cobalt import. This is Putative fused cobalt transport protein CbiMQ (cbiMQ) from Methanocorpusculum labreanum (strain ATCC 43576 / DSM 4855 / Z).